A 166-amino-acid chain; its full sequence is Large ribosomal subunit protein uL10 (166 aa).

This sequence belongs to the universal ribosomal protein uL10 family. Part of the ribosomal stalk of the 50S ribosomal subunit. The N-terminus interacts with L11 and the large rRNA to form the base of the stalk. The C-terminus forms an elongated spine to which L12 dimers bind in a sequential fashion forming a multimeric L10(L12)X complex.

Its function is as follows. Forms part of the ribosomal stalk, playing a central role in the interaction of the ribosome with GTP-bound translation factors. The sequence is that of Large ribosomal subunit protein uL10 from Bacillus cereus (strain 03BB102).